The chain runs to 103 residues: N(4)-acetylcytidine amidohydrolase (103 aa).

The region spanning 6–101 (ITFFQRFQDD…QTQFYVIEFK (96 aa)) is the ASCH domain. Lys-21 acts as the Proton acceptor in catalysis. Residue Thr-24 is the Nucleophile of the active site. The Proton donor role is filled by Glu-74.

Belongs to the N(4)-acetylcytidine amidohydrolase family.

The enzyme catalyses N(4)-acetylcytidine + H2O = cytidine + acetate + H(+). The catalysed reaction is N(4)-acetyl-2'-deoxycytidine + H2O = 2'-deoxycytidine + acetate + H(+). It catalyses the reaction N(4)-acetylcytosine + H2O = cytosine + acetate + H(+). Catalyzes the hydrolysis of N(4)-acetylcytidine (ac4C). In Escherichia coli O81 (strain ED1a), this protein is N(4)-acetylcytidine amidohydrolase (yqfB).